Consider the following 162-residue polypeptide: Transcription elongation factor GreA (162 aa).

A coiled-coil region spans residues 45–74; the sequence is ENAEYEAAREKQAFIEGRIKELEDMTARAE.

The protein belongs to the GreA/GreB family.

Necessary for efficient RNA polymerase transcription elongation past template-encoded arresting sites. The arresting sites in DNA have the property of trapping a certain fraction of elongating RNA polymerases that pass through, resulting in locked ternary complexes. Cleavage of the nascent transcript by cleavage factors such as GreA or GreB allows the resumption of elongation from the new 3'terminus. GreA releases sequences of 2 to 3 nucleotides. This chain is Transcription elongation factor GreA, found in Rickettsia felis (strain ATCC VR-1525 / URRWXCal2) (Rickettsia azadi).